The primary structure comprises 57 residues: Metallothionein (57 aa).

The protein belongs to the metallothionein superfamily. Type 14 family.

This protein complexes cadmium, zinc and copper. This is Metallothionein (mtnA) from Thermostichus vulcanus (Synechococcus vulcanus).